Consider the following 317-residue polypeptide: Protease 7 (317 aa).

A signal peptide spans 1–20 (MRAKLLGIVLTTPIAISSFA). Topologically, residues 21–31 (STETLSFTPDN) are periplasmic. Residues 32-41 (INADISLGTL) traverse the membrane as a beta stranded segment. The Extracellular portion of the chain corresponds to 42–69 (SGKTKERVYLAEEGGRKVSQLDWKFNNA). Residues 70–78 (AIIKGAINW) traverse the membrane as a beta stranded segment. The Periplasmic portion of the chain corresponds to 79–83 (DLMPQ). A beta stranded transmembrane segment spans residues 84–92 (ISIGAAGWT). The Extracellular portion of the chain corresponds to 93–130 (TLGSRGGNMVDQDWMDSSNPGTWTDESRHPDTQLNYAN). Residues Asp103 and Asp105 contribute to the active site. A beta stranded transmembrane segment spans residues 131–140 (EFDLNIKGWL). The Periplasmic segment spans residues 141-145 (LNEPN). Residues 146 to 156 (YRLGLMAGYQE) form a beta stranded membrane-spanning segment. Topologically, residues 157–197 (SRYSFTARGGSYIYSSEEGFRDDIGSFPNGERAIGYKQRFK) are extracellular. Residues 198-209 (MPYIGLTGSYRY) traverse the membrane as a beta stranded segment. The Periplasmic portion of the chain corresponds to 210 to 211 (ED). A beta stranded membrane pass occupies residues 212 to 221 (FELGGTFKYS). The Extracellular segment spans residues 222–250 (GWVESSDNDEHYDPGKRITYRSKVKDQNY). Residues Asp230 and His232 contribute to the active site. The chain crosses the membrane as a beta stranded span at residues 251–261 (YSVAVNAGYYV). Residues 262–264 (TPN) lie on the Periplasmic side of the membrane. Residues 265-274 (AKVYVEGAWN) form a beta stranded membrane-spanning segment. The Extracellular segment spans residues 275–306 (RVTNKKGNTSLYDHNNNTSDYSKNGAGIENYN). Residues 307–316 (FITTAGLKYT) traverse the membrane as a beta stranded segment. Residue Phe317 is a topological domain, periplasmic.

The protein belongs to the peptidase A26 family. As to quaternary structure, homopentamer.

It localises to the cell outer membrane. It carries out the reaction Has a virtual requirement for Arg in the P1 position and a slightly less stringent preference for this residue in the P1' position, which can also contain Lys, Gly or Val.. Inhibited by zinc. Functionally, protease that can cleave T7 RNA polymerase, ferric enterobactin receptor protein (FEP), antimicrobial peptide protamine and other proteins. This protease has a specificity for paired basic residues. This Escherichia coli (strain K12) protein is Protease 7 (ompT).